The primary structure comprises 321 residues: 2,3,4,5-tetrahydropyridine-2,6-dicarboxylate N-succinyltransferase (321 aa).

Residues Asp166 and Glu183 each contribute to the Mg(2+) site. Glu199 (acyl-anhydride intermediate) is an active-site residue. Residues Arg201, Gly216, Ser219, Ala242, 257–258, Gly265, Lys281, and 294–297 each bind succinyl-CoA; these read EA and RRNS.

The protein belongs to the type 2 tetrahydrodipicolinate N-succinyltransferase family. As to quaternary structure, homotrimer.

It is found in the cytoplasm. It carries out the reaction (S)-2,3,4,5-tetrahydrodipicolinate + succinyl-CoA + H2O = (S)-2-succinylamino-6-oxoheptanedioate + CoA. It participates in amino-acid biosynthesis; L-lysine biosynthesis via DAP pathway; LL-2,6-diaminopimelate from (S)-tetrahydrodipicolinate (succinylase route): step 1/3. Its function is as follows. Catalyzes the conversion of the cyclic tetrahydrodipicolinate (THDP) into the acyclic N-succinyl-L-2-amino-6-oxopimelate using succinyl-CoA. The chain is 2,3,4,5-tetrahydropyridine-2,6-dicarboxylate N-succinyltransferase from Micrococcus luteus (strain ATCC 4698 / DSM 20030 / JCM 1464 / CCM 169 / CCUG 5858 / IAM 1056 / NBRC 3333 / NCIMB 9278 / NCTC 2665 / VKM Ac-2230) (Micrococcus lysodeikticus).